The sequence spans 435 residues: D-amino acid dehydrogenase (435 aa).

An FAD-binding site is contributed by Val-3–Trp-17.

Belongs to the DadA oxidoreductase family. FAD serves as cofactor.

It carries out the reaction a D-alpha-amino acid + A + H2O = a 2-oxocarboxylate + AH2 + NH4(+). It participates in amino-acid degradation; D-alanine degradation; NH(3) and pyruvate from D-alanine: step 1/1. Its function is as follows. Oxidative deamination of D-amino acids. The polypeptide is D-amino acid dehydrogenase (Xylella fastidiosa (strain M12)).